The sequence spans 83 residues: uncharacterized protein (83 aa).

This is an uncharacterized protein from Rickettsia prowazekii (strain Madrid E).